Reading from the N-terminus, the 362-residue chain is Alpha-glucoside transport ATP-binding protein AglK (362 aa).

An ABC transporter domain is found at 4–235 (LLLKDIRKSY…PANLFVARFI (232 aa)). 36–43 (GPSGCGKS) lines the ATP pocket.

It belongs to the ABC transporter superfamily.

It localises to the cell inner membrane. In terms of biological role, part of the binding-protein-dependent transport system for alpha-glucosides such as sucrose, maltose and trehalose. Probably responsible for energy coupling to the transport system. The polypeptide is Alpha-glucoside transport ATP-binding protein AglK (aglK) (Rhizobium meliloti (strain 1021) (Ensifer meliloti)).